The sequence spans 349 residues: MTHQTGIHATTELRDFFAKARNGSVRLIKVIIEEEQLVLGAHKELARRWDVDYDAFVLPLLDEQQPCYVLYRLDSQNAQGYEWLFISWSPDNSPVRLKMLYAATRATVKKEFGGGHIKDEMFGTVKEDVSLSGYQKHVSSCSAPAPLTAAEQELQQIRINEVKTEISVESKHQTLQGLAFPLQLDAQQAIQTLKQKKINYIQLKLDLERETIDLVHTSPTDISDLPKRIPQDSARYHFFLYKHSHEGDYLESVVFIYSMPGYKCSIKERMLYSSCKSRLLDTVEQEFCLEIAKKIEIDDGAELTAEFLYDEVHPKQHAFKQAFAKPKGPVGKRGQKRLIKGPGENGEDS.

2 ADF-H domains span residues 4-139 (QTGI…KHVS) and 177-313 (GLAF…DEVH). The segment at 324-349 (AKPKGPVGKRGQKRLIKGPGENGEDS) is disordered.

Belongs to the actin-binding proteins ADF family. Twinfilin subfamily. Interacts with G-actin; ADP-actin form and capping protein (CP).

It is found in the cytoplasm. The protein resides in the cytoskeleton. The protein localises to the perinuclear region. Actin-binding protein involved in motile and morphological processes. Inhibits actin polymerization, likely by sequestering G-actin. The polypeptide is Twinfilin-2 (TWF2) (Gallus gallus (Chicken)).